The primary structure comprises 474 residues: Probable CAAX prenyl protease 1 (474 aa).

3 helical membrane-spanning segments follow: residues 103-123 (SWFSTIVSTFTLAVDLLIIKY), 196-216 (IFVIDLLKELSLGGLLMSVVV), and 230-250 (FIMYAWGAYIVFGLILQTIAP). Residue H332 participates in Zn(2+) binding. E333 is an active-site residue. H336 lines the Zn(2+) pocket. 2 consecutive transmembrane segments (helical) span residues 344–364 (INTIIDYGMSLFHLFLFAAFI) and 381–401 (VIVGLLLFSDALGPLSSILTF). E411 contacts Zn(2+). Catalysis depends on D415, which acts as the Proton donor.

It belongs to the peptidase M48A family. The cofactor is Zn(2+).

It localises to the endoplasmic reticulum membrane. It carries out the reaction Hydrolyzes the peptide bond -P2-(S-farnesyl or geranylgeranyl)C-P1'-P2'-P3'-COOH where P1' and P2' are amino acids with aliphatic side chains and P3' is any C-terminal residue.. Its function is as follows. Proteolytically removes the C-terminal three residues of farnesylated proteins. The polypeptide is Probable CAAX prenyl protease 1 (Schizosaccharomyces pombe (strain 972 / ATCC 24843) (Fission yeast)).